A 260-amino-acid chain; its full sequence is Voltage-dependent calcium channel gamma-6 subunit (260 aa).

The tract at residues 14 to 33 (RRGAAGRRRAHGQGRSGLTP) is disordered. Over residues 15–25 (RGAAGRRRAHG) the composition is skewed to basic residues. 4 consecutive transmembrane segments (helical) span residues 43–63 (LLLA…EFWV), 143–163 (VIAV…IMVL), 169–189 (FLLR…LVSL), and 221–241 (LGCG…FLLL).

Belongs to the PMP-22/EMP/MP20 family. CACNG subfamily. In terms of assembly, interacts with CACNA1C. Identified in a complex with the L-type calcium channel subunits CACNA1C, CACNA2D1 and either CACNB1 or CACNB2. In terms of tissue distribution, detected in heart left ventricle.

It is found in the cell membrane. Regulates the activity of L-type calcium channels that contain CACNA1C as pore-forming subunit. The polypeptide is Voltage-dependent calcium channel gamma-6 subunit (CACNG6) (Homo sapiens (Human)).